A 352-amino-acid polypeptide reads, in one-letter code: tRNA uridine(34) hydroxylase (352 aa).

Residues 146 to 240 enclose the Rhodanese domain; sequence DNPDTLFVDM…YARKAREQGL (95 aa). Catalysis depends on cysteine 200, which acts as the Cysteine persulfide intermediate. The segment covering 315–328 has biased composition (basic and acidic residues); that stretch reads ETEQRARRAGRENG. Positions 315–352 are disordered; that stretch reads ETEQRARRAGRENGAKIFNKSRHRLQDGLNSTSLQSVE. Residues 342 to 352 are compositionally biased toward polar residues; it reads GLNSTSLQSVE.

This sequence belongs to the TrhO family.

It carries out the reaction uridine(34) in tRNA + AH2 + O2 = 5-hydroxyuridine(34) in tRNA + A + H2O. In terms of biological role, catalyzes oxygen-dependent 5-hydroxyuridine (ho5U) modification at position 34 in tRNAs. This chain is tRNA uridine(34) hydroxylase, found in Photorhabdus laumondii subsp. laumondii (strain DSM 15139 / CIP 105565 / TT01) (Photorhabdus luminescens subsp. laumondii).